The chain runs to 57 residues: UPF0391 membrane protein NE0130 (57 aa).

2 helical membrane-spanning segments follow: residues 1-21 (MLKW…FGFR) and 33-53 (FLFF…LLGI).

Belongs to the UPF0391 family.

The protein resides in the cell membrane. The polypeptide is UPF0391 membrane protein NE0130 (Nitrosomonas europaea (strain ATCC 19718 / CIP 103999 / KCTC 2705 / NBRC 14298)).